A 281-amino-acid chain; its full sequence is 4-diphosphocytidyl-2-C-methyl-D-erythritol kinase (281 aa).

Lysine 11 is an active-site residue. ATP is bound at residue 95 to 105; sequence PVAAGLGGGSS. The active site involves aspartate 137.

The protein belongs to the GHMP kinase family. IspE subfamily.

The enzyme catalyses 4-CDP-2-C-methyl-D-erythritol + ATP = 4-CDP-2-C-methyl-D-erythritol 2-phosphate + ADP + H(+). It participates in isoprenoid biosynthesis; isopentenyl diphosphate biosynthesis via DXP pathway; isopentenyl diphosphate from 1-deoxy-D-xylulose 5-phosphate: step 3/6. Functionally, catalyzes the phosphorylation of the position 2 hydroxy group of 4-diphosphocytidyl-2C-methyl-D-erythritol. This Geobacter metallireducens (strain ATCC 53774 / DSM 7210 / GS-15) protein is 4-diphosphocytidyl-2-C-methyl-D-erythritol kinase.